A 377-amino-acid chain; its full sequence is Lipoyl synthase, mitochondrial (377 aa).

[4Fe-4S] cluster-binding residues include Cys-103, Cys-108, Cys-114, Cys-134, Cys-138, Cys-141, and Ser-349. Positions 119 to 338 (EHGTQTATIM…EERGNELGFL (220 aa)) constitute a Radical SAM core domain.

Belongs to the radical SAM superfamily. Lipoyl synthase family. [4Fe-4S] cluster is required as a cofactor.

Its subcellular location is the mitochondrion. It carries out the reaction [[Fe-S] cluster scaffold protein carrying a second [4Fe-4S](2+) cluster] + N(6)-octanoyl-L-lysyl-[protein] + 2 oxidized [2Fe-2S]-[ferredoxin] + 2 S-adenosyl-L-methionine + 4 H(+) = [[Fe-S] cluster scaffold protein] + N(6)-[(R)-dihydrolipoyl]-L-lysyl-[protein] + 4 Fe(3+) + 2 hydrogen sulfide + 2 5'-deoxyadenosine + 2 L-methionine + 2 reduced [2Fe-2S]-[ferredoxin]. The protein operates within protein modification; protein lipoylation via endogenous pathway; protein N(6)-(lipoyl)lysine from octanoyl-[acyl-carrier-protein]: step 2/2. Its function is as follows. Catalyzes the radical-mediated insertion of two sulfur atoms into the C-6 and C-8 positions of the octanoyl moiety bound to the lipoyl domains of lipoate-dependent enzymes, thereby converting the octanoylated domains into lipoylated derivatives. In Drosophila sechellia (Fruit fly), this protein is Lipoyl synthase, mitochondrial.